We begin with the raw amino-acid sequence, 71 residues long: UPF0346 protein SPP_0954 (71 aa).

The protein belongs to the UPF0346 family.

The sequence is that of UPF0346 protein SPP_0954 from Streptococcus pneumoniae (strain P1031).